The sequence spans 464 residues: Soluble pyridine nucleotide transhydrogenase (464 aa).

35–44 (DSRRVVGGNC) provides a ligand contact to FAD.

It belongs to the class-I pyridine nucleotide-disulfide oxidoreductase family. Requires FAD as cofactor.

It is found in the cytoplasm. The enzyme catalyses NAD(+) + NADPH = NADH + NADP(+). In terms of biological role, conversion of NADPH, generated by peripheral catabolic pathways, to NADH, which can enter the respiratory chain for energy generation. The polypeptide is Soluble pyridine nucleotide transhydrogenase (Pseudomonas aeruginosa (strain LESB58)).